We begin with the raw amino-acid sequence, 99 residues long: DNA-binding protein HU (99 aa).

Positions 63–82 (HRKEREGRNPKTGAKMKIDA) are disordered.

The protein belongs to the bacterial histone-like protein family. In terms of assembly, homodimer.

Its function is as follows. Histone-like DNA-binding protein which is capable of wrapping DNA to stabilize it, and thus to prevent its denaturation under extreme environmental conditions. This Rickettsia prowazekii (strain Madrid E) protein is DNA-binding protein HU (hup).